A 391-amino-acid chain; its full sequence is Phosphoglycerate kinase (391 aa).

Substrate contacts are provided by residues D21–N23, R36, H59–R62, R113, and R146. ATP is bound by residues K197, E319, and G345–T348.

This sequence belongs to the phosphoglycerate kinase family. In terms of assembly, monomer.

It localises to the cytoplasm. The catalysed reaction is (2R)-3-phosphoglycerate + ATP = (2R)-3-phospho-glyceroyl phosphate + ADP. Its pathway is carbohydrate degradation; glycolysis; pyruvate from D-glyceraldehyde 3-phosphate: step 2/5. In Chromobacterium violaceum (strain ATCC 12472 / DSM 30191 / JCM 1249 / CCUG 213 / NBRC 12614 / NCIMB 9131 / NCTC 9757 / MK), this protein is Phosphoglycerate kinase.